The following is a 101-amino-acid chain: Protein S100-A11 (101 aa).

EF-hand domains are found at residues 13 to 48 and 54 to 89; these read IESL…ELAS and KDPA…IAVA. Ca(2+) is bound by residues asparagine 30, lysine 32, glutamate 37, aspartate 67, asparagine 69, aspartate 71, glutamine 73, and glutamate 78.

It belongs to the S-100 family. In terms of assembly, homodimer; disulfide-linked. In terms of tissue distribution, smooth muscle and non-muscle tissues.

This is Protein S100-A11 (S100A11) from Gallus gallus (Chicken).